Reading from the N-terminus, the 320-residue chain is TATA box-binding protein-like 2 (320 aa).

Belongs to the TBP family. As to expression, expression is restricted to the gonads, and is higher in the ovary than the testis.

It is found in the nucleus. Functionally, TATA box-binding transcription factor. Members of the TBP family are differentially required to regulate transcription and development during early embryogenesis. Required for gastrulation. Regulates a large subset of genes that are ventrally expressed. Binds to a subset of promoters. The sequence is that of TATA box-binding protein-like 2 from Xenopus laevis (African clawed frog).